We begin with the raw amino-acid sequence, 304 residues long: bZIP transcription factor 50 (304 aa).

Residues 1 to 222 (MDVEFFADLD…MQESAVLTET (222 aa)) are Cytoplasmic-facing. Disordered stretches follow at residues 26-60 (GSGVSGLFAPSPPHDAEAGSPESVSSRRPSPSREA) and 94-163 (GEEE…ERKK). A compositionally biased stretch (low complexity) spans 45–59 (SPESVSSRRPSPSRE). Over residues 127–139 (EKEDVEAEVDGDD) the composition is skewed to acidic residues. The region spanning 141 to 203 (MSKKKRRQMR…NMALRQSLLK (63 aa)) is the bZIP domain. The basic motif stretch occupies residues 143–167 (KKKRRQMRNRDSAMKSRERKKMYVK). Positions 150-163 (RNRDSAMKSRERKK) are enriched in basic and acidic residues. The leucine-zipper stretch occupies residues 169 to 183 (LETKSKYLEAECRRL). Residues 223–243 (LPLVSLLWLVSIVCLLPVPGL) traverse the membrane as a helical segment. The Lumenal portion of the chain corresponds to 244 to 304 (PNRNPVARSS…GPFRLAAAAC (61 aa)).

This sequence belongs to the bZIP family.

It is found in the endoplasmic reticulum membrane. It localises to the nucleus. With respect to regulation, transcriptionally activated by IRE1 in response to endoplasmic reticulum (ER) stress. IRE1 cleaves a 20-bp fragment causing a frameshift of the mRNA transcript, leading to a nuclear isoform of the BZIP50 activator. Its function is as follows. Transcription factor involved in endoplasmic reticulum (ER) stress response. Acts downstream of the ER stress sensors IRE1, BZIP39 and BZIP60 to activate BiP chaperone genes. The polypeptide is bZIP transcription factor 50 (Oryza sativa subsp. japonica (Rice)).